The sequence spans 1147 residues: uncharacterized protein (1147 aa).

Disordered regions lie at residues 226-245 (FGQGQQDLDEGEAGAGGQVD), 255-297 (IQGT…QEKA), 431-617 (SQHP…QSCI), 647-670 (EEMDDHEEGGELRENHPDAQDPVR), 705-945 (HRHR…RRLQ), 1003-1032 (RQQQEEFRRKCQELQRKKQQEEAERAEAEK), and 1060-1090 (YQRRKQEAEEKTRWEAEDRRQKEKEAARLAQ). A compositionally biased stretch (basic and acidic residues) spans 268–296 (WQKDETQTEDTSKDNHHCIHTSKENHQEK). Residues 431–441 (SQHPPKGKAQR) show a composition bias toward basic residues. Residues 538-549 (PAGGALPAAGQA) are compositionally biased toward low complexity. Polar residues predominate over residues 584-603 (LNETSPLTQKPENQGAQQSL). Polar residues predominate over residues 743-752 (NQKTSNNISN). Residues 743–804 (NQKTSNNISN…ESKAEKKSQL (62 aa)) are a coiled coil. Residues 768–802 (TDKSKAPKREKEGKLHEEAEAAVGKSKESKAEKKS) show a composition bias toward basic and acidic residues. Over residues 807–819 (KGKKTGAKGKRTR) the composition is skewed to basic residues. Positions 870 to 884 (SQVSIDGRSSPTQTA) are enriched in polar residues. Residues 895–945 (DRSHEDPSKAFLVKREQEKASRDRLRAERAEMRRLEVERKRREQEEQRRLQ) show a composition bias toward basic and acidic residues. A coiled-coil region spans residues 907–1112 (VKREQEKASR…QKDALKKHLH (206 aa)).

This is an uncharacterized protein from Bos taurus (Bovine).